The sequence spans 329 residues: Cytosolic arginine sensor for mTORC1 subunit 1 (329 aa).

At Ser14 the chain carries Phosphoserine; by PKB/AKT1. ACT domains are found at residues 72–138 and 260–321; these read AEAT…HTLA and GELW…EVLQ. Residues 111 to 112, Gly274, 280 to 281, and 300 to 304 contribute to the L-arginine site; these read SV, IV, and TFNFD.

This sequence belongs to the GATS family. Forms homodimers and heterodimers with CASTOR2. Interacts with the GATOR2 complex which is composed of MIOS, SEC13, SEH1L, WDR24 and WDR59; the interaction is negatively regulated by arginine. Interacts with TM4SF5; the interaction is positively regulated by leucine and is negatively regulated by arginine. Phosphorylation at Ser-14 by AKT1, promoting the interaction between CASTOR1 and RNF167. In terms of processing, ubiquitinated by RNF167 via 'Lys-29'-polyubiquitination, leading to its degradation, releasing the GATOR2 complex. Ubiquitination by RNF167 is promoted by phosphorylation at Ser-14 by AKT1. Widely expressed.

It localises to the cytoplasm. Its subcellular location is the cytosol. Functions as an intracellular arginine sensor within the amino acid-sensing branch of the TORC1 signaling pathway. As a homodimer or a heterodimer with CASTOR2, binds and inhibits the GATOR subcomplex GATOR2 and thereby mTORC1. Binding of arginine to CASTOR1 allosterically disrupts the interaction of CASTOR1-containing dimers with GATOR2 which can in turn activate mTORC1 and the TORC1 signaling pathway. This is Cytosolic arginine sensor for mTORC1 subunit 1 from Homo sapiens (Human).